We begin with the raw amino-acid sequence, 290 residues long: Picrinine-N-methytransferase TMT4 (290 aa).

The segment at methionine 71–glycine 80 is SAM motif I. The Vacuolar targeting signal signature appears at aspartate 133 to valine 139. Residues glycine 134–isoleucine 142 form an SAM motif II region. Residues valine 161–isoleucine 170 are SAM motif III.

This sequence belongs to the class I-like SAM-binding methyltransferase superfamily. gTMT family. In terms of assembly, homodimer.

The protein resides in the vacuole membrane. The catalysed reaction is picrinine + S-adenosyl-L-methionine = ervincine + S-adenosyl-L-homocysteine + H(+). It participates in alkaloid biosynthesis; vindoline biosynthesis. Functionally, S-adenosyl-L-methionine-dependent N-methyltransferase involved in the biosynthesis of biologically active monoterpenoid indole alkaloids (MIAs) natural products including vindoline. Catalyzes the conversion of picrinine to N-methylpicrinine (ervincine). This is Picrinine-N-methytransferase TMT4 from Catharanthus roseus (Madagascar periwinkle).